Consider the following 935-residue polypeptide: Epstein-Barr nuclear antigen 3 (935 aa).

Disordered regions lie at residues 1-89, 342-373, 399-446, 611-634, and 883-908; these read MDKD…DLPG, HVEGATGETREESEDTESDGDDEDLPCIVSRG, TEQG…VPEP, KQASVEVQPPQVTQVSPQQPMEGP, and HGRPRPRTPEWPVQGESGQNVTDHEP. The segment covering 10 to 19 has biased composition (acidic residues); it reads ALDDNMEEEV. A compositionally biased stretch (polar residues) spans 20–29; it reads PSTSVVQEQV. Positions 352–366 are enriched in acidic residues; sequence EESEDTESDGDDEDL. Residues 399–410 show a composition bias toward basic and acidic residues; sequence TEQGKEVLEKAR. A compositionally biased stretch (polar residues) spans 431-440; that stretch reads SDETATSHGS. The segment covering 615–630 has biased composition (low complexity); sequence VEVQPPQVTQVSPQQP.

This sequence belongs to the herpesviridae EBNA-3 family. As to quaternary structure, interacts with human UCKL1. Interacts with host CTPB1; this interaction seems important for EBNA3-mediated transcriptional repression. Interacts with host RBPJ. Interacts with host USP12 and WDR48; these interactions form a deubiquitination-competent complex.

Its subcellular location is the host nucleus matrix. Its function is as follows. Plays an essential role for activation and immortalization of human B-cells. Represses transcription of viral promoters TP1 and Cp through interaction with host RBPJ, and inhibits EBNA2-mediated activation of these promoters. Since Cp is the promoter for all EBNA mRNAs, EBNA3A probably contributes to a negative autoregulatory control loop. The chain is Epstein-Barr nuclear antigen 3 (EBNA3) from Homo sapiens (Human).